The chain runs to 184 residues: Guanylate kinase (184 aa).

Positions 5–183 (NGLIVITGPS…ALLEIKKLIK (179 aa)) constitute a Guanylate kinase-like domain. Residue 12–19 (GPSGVGKG) participates in ATP binding.

This sequence belongs to the guanylate kinase family.

The protein localises to the cytoplasm. The enzyme catalyses GMP + ATP = GDP + ADP. Functionally, essential for recycling GMP and indirectly, cGMP. The polypeptide is Guanylate kinase (Prochlorococcus marinus (strain SARG / CCMP1375 / SS120)).